A 547-amino-acid chain; its full sequence is Apicoplast pyruvate carrier 1 (547 aa).

A disordered region spans residues 1 to 33 (MEPRAPPRLSVSSPRRESGATVPSHSPSTLLSC). The Cytoplasmic portion of the chain corresponds to 1–45 (MEPRAPPRLSVSSPRRESGATVPSHSPSTLLSCASSETATEKRRR). The segment covering 21–33 (TVPSHSPSTLLSC) has biased composition (polar residues). Helical transmembrane passes span 46-66 (WTGV…GTVY), 126-146 (AWVL…GGIA), 167-187 (VGMA…FGVI), 189-209 (GVGL…WFPE), 212-232 (GIVS…FSPL), 278-298 (LLAV…RVPA), 345-365 (ALVS…GLAI), 385-405 (ILTE…NAVG), 417-437 (GFQT…FFLP), 445-465 (LCYA…FSVF), 467-487 (SAVA…FIFG), and 515-535 (LMGL…ALSP).

This sequence belongs to the major facilitator superfamily. Interacts with apicoplast pyruvate carrier 2.

It localises to the plastid. Its subcellular location is the apicoplast. The protein localises to the membrane. In terms of biological role, along with apicoplast pyruvate carrier 2, forms apicoplast pyruvate carrier (APC) complex, which transports pyruvate into the apicoplast and may also transport amino acids like methionine, serine, glycine and tryptophan with low efficiency. Required for maintaining pyruvate-dependent metabolic activities in the apicoplast, such as synthesis of fatty acids, isopentenyl pyrophosphate (IPP), dimethylallyl pyrophosphate (DMAPP) and methylerythritol 4-phosphate (MEP). Required for maintaining the integrity of the apicoplast. Required for normal parasite growth. This Toxoplasma gondii protein is Apicoplast pyruvate carrier 1.